A 189-amino-acid polypeptide reads, in one-letter code: RPW8-like protein 1 (189 aa).

One can recognise an RPW8 domain in the interval 1–153 (MPLVELLTSA…ITRQPMDIIE (153 aa)). A helical transmembrane segment spans residues 7 to 24 (LTSAALGLSLQLLHDAII). Coiled coils occupy residues 65–92 (FRKV…LKLR) and 126–147 (DIKK…ITRQ). Residue asparagine 177 is glycosylated (N-linked (GlcNAc...) asparagine).

The protein belongs to the plant RPW8 protein family.

Its subcellular location is the membrane. Its function is as follows. Probable disease resistance (R) protein. This chain is RPW8-like protein 1, found in Arabidopsis thaliana (Mouse-ear cress).